The following is a 415-amino-acid chain: Multidrug resistance protein MdtA (415 aa).

An N-terminal signal peptide occupies residues Met1–Ala21. Disordered stretches follow at residues Ser32–Ala60 and Glu392–Ser415. Basic and acidic residues predominate over residues Pro399–Ser415.

Belongs to the membrane fusion protein (MFP) (TC 8.A.1) family. In terms of assembly, part of a tripartite efflux system composed of MdtA, MdtB and MdtC.

The protein resides in the cell inner membrane. The MdtABC tripartite complex confers resistance against novobiocin and deoxycholate. The sequence is that of Multidrug resistance protein MdtA from Escherichia coli (strain K12 / MC4100 / BW2952).